Here is a 282-residue protein sequence, read N- to C-terminus: Pantothenate synthetase (282 aa).

30–37 (MGYLHEGH) contacts ATP. His-37 functions as the Proton donor in the catalytic mechanism. Gln-61 serves as a coordination point for (R)-pantoate. Gln-61 is a binding site for beta-alanine. 147-150 (GQKD) is an ATP binding site. Gln-153 contacts (R)-pantoate. Residues Val-176 and 184–187 (MSSR) each bind ATP.

This sequence belongs to the pantothenate synthetase family. Homodimer.

It is found in the cytoplasm. The catalysed reaction is (R)-pantoate + beta-alanine + ATP = (R)-pantothenate + AMP + diphosphate + H(+). It participates in cofactor biosynthesis; (R)-pantothenate biosynthesis; (R)-pantothenate from (R)-pantoate and beta-alanine: step 1/1. Functionally, catalyzes the condensation of pantoate with beta-alanine in an ATP-dependent reaction via a pantoyl-adenylate intermediate. The sequence is that of Pantothenate synthetase from Caldicellulosiruptor bescii (strain ATCC BAA-1888 / DSM 6725 / KCTC 15123 / Z-1320) (Anaerocellum thermophilum).